Here is a 1068-residue protein sequence, read N- to C-terminus: Rho family-interacting cell polarization regulator 2 (1068 aa).

2 positions are modified to phosphoserine; in isoform: Ser-21 and Ser-37. Residues 45–73 are disordered; that stretch reads LKKPQAKLKKMHNLGHKNNNPPKEPQPKR. Residues 48–59 are compositionally biased toward basic residues; it reads PQAKLKKMHNLG. Residues 55–113 are involved in cell filopodia formation; it reads MHNLGHKNNNPPKEPQPKRVEEVYRALKNGLDEYLEVHQTELDKLTAQLKDMKRNSRLG. Residues 83 to 112 are a coiled coil; the sequence is NGLDEYLEVHQTELDKLTAQLKDMKRNSRL. Ser-341 carries the post-translational modification Phosphoserine; in isoform 2. Residues 474–491 are compositionally biased toward polar residues; sequence QNEGMDDTSSASSRNSLG. Residues 474-524 are disordered; that stretch reads QNEGMDDTSSASSRNSLGEGQEPKSHLKEEDPEEPRKPASAPSEACRRQSS. The span at 494-510 shows a compositional bias: basic and acidic residues; the sequence is QEPKSHLKEEDPEEPRK. Ser-523 bears the Phosphoserine; in isoform 2 mark. Ser-573 is subject to Phosphoserine. Ser-585 is modified (phosphoserine; in isoform 2). Residues 768–793 adopt a coiled-coil conformation; it reads VARSLLEKLSRQIQVMEKLAAVSDEN.

The protein belongs to the RIPOR family. In terms of assembly, homooligomer; homooligomerization is regulated by RHOC and leads to the formation of concatemers through the association of N- and C-termini. Interacts with 14-3-3 proteins; these interactions occur during myogenic cell differentiation. Interacts with HDAC6; this interaction occurs during early myogenic differentiation and prevents HDAC6 to deacetylate tubulin. Interacts with DYSF; this interaction occurs during early myogenic differentiation. Interacts with MYOF. Interacts with RHOC. Isoform 1 and isoform 2 interact (via active GTP- or inactive GDP-bound forms) with RHOA; these interactions are direct, block the loading of GTP to RHOA and decrease upon chemokine CCL19 stimulation in primary T lymphocytes. Isoform 2 interacts (phosphorylated form) with HDAC6; this interaction induces T cell proliferation arrest. Isoform 2 interacts (phosphorylated form) with 14-3-3 proteins; these interactions induces T cell proliferation arrest. Isoform 2 interacts with 14-3-3 proteins. Isoform 2 interacts (via phosphorylated form) with YWHAB; this interaction occurs in a chemokine-dependent manner and does not compete for binding of RIPOR2 with RHOA nor blocks inhibition of RIPOR2-mediated RHOA activity. Isoform 2 interacts with YWHAE. Isoform 2 interacts with YWHAQ. In terms of processing, phosphorylated. Isoform 2 is phosphorylated in T cells. Chemokine-induced phosphorylation of isoform 2 in neutrophils occurs in a PKC- and AKT-dependent manner, resulting in RIPOR2 interaction with YWHAB and stabilization. Isoform 2 is phosphorylated by PKCA, AKT1 and MAPKAPK1A; in vitro. Post-translationally, acetylated during myogenic differentiation. As to expression, expressed in primary fetal mononuclear myoblast. Expressed strongly in naive T lymphocytes. Expressed weakly in activated T lymphocytes (at protein level). Expressed in blood cells and adult tissues of hematopoietic origin, such as the secondary lymphoid organs. Expressed in cytotrophoblast.

The protein localises to the cytoplasm. It localises to the cytoskeleton. It is found in the cell projection. Its subcellular location is the filopodium. The protein resides in the stereocilium. The protein localises to the stereocilium membrane. It localises to the apical cell membrane. Acts as an inhibitor of the small GTPase RHOA and plays several roles in the regulation of myoblast and hair cell differentiation, lymphocyte T proliferation and neutrophil polarization. Inhibits chemokine-induced T lymphocyte responses, such as cell adhesion, polarization and migration. Involved also in the regulation of neutrophil polarization, chemotaxis and adhesion. Required for normal development of inner and outer hair cell stereocilia within the cochlea of the inner ear. Plays a role for maintaining the structural organization of the basal domain of stereocilia. Involved in mechanosensory hair cell function. Required for normal hearing. In terms of biological role, acts as an inhibitor of the small GTPase RHOA. Plays a role in fetal mononuclear myoblast differentiation by promoting filopodia and myotube formation. Maintains naive T lymphocytes in a quiescent state. In Homo sapiens (Human), this protein is Rho family-interacting cell polarization regulator 2 (RIPOR2).